Here is a 364-residue protein sequence, read N- to C-terminus: Uroporphyrinogen decarboxylase (364 aa).

Residues 28-32, aspartate 78, tyrosine 160, threonine 215, and histidine 333 each bind substrate; that span reads RQAGR.

Belongs to the uroporphyrinogen decarboxylase family. Homodimer.

The protein localises to the cytoplasm. The enzyme catalyses uroporphyrinogen III + 4 H(+) = coproporphyrinogen III + 4 CO2. It functions in the pathway porphyrin-containing compound metabolism; protoporphyrin-IX biosynthesis; coproporphyrinogen-III from 5-aminolevulinate: step 4/4. Its function is as follows. Catalyzes the decarboxylation of four acetate groups of uroporphyrinogen-III to yield coproporphyrinogen-III. This Burkholderia cenocepacia (strain ATCC BAA-245 / DSM 16553 / LMG 16656 / NCTC 13227 / J2315 / CF5610) (Burkholderia cepacia (strain J2315)) protein is Uroporphyrinogen decarboxylase.